Here is a 709-residue protein sequence, read N- to C-terminus: Threonine--tRNA ligase, mitochondrial 1 (709 aa).

Residues 1-21 constitute a mitochondrion transit peptide; that stretch reads MLLRLTARSIRRFTTSSSSLP. The region spanning 73 to 135 is the TGS domain; sequence DPIKVTLPDG…EGDCKLELFK (63 aa). Residues C407, H458, and H584 each contribute to the Zn(2+) site.

Belongs to the class-II aminoacyl-tRNA synthetase family.

The protein resides in the mitochondrion. It is found in the cytoplasm. The protein localises to the cytosol. The catalysed reaction is tRNA(Thr) + L-threonine + ATP = L-threonyl-tRNA(Thr) + AMP + diphosphate + H(+). This chain is Threonine--tRNA ligase, mitochondrial 1, found in Arabidopsis thaliana (Mouse-ear cress).